The following is a 228-amino-acid chain: Probable septum site-determining protein MinC (228 aa).

It belongs to the MinC family. Interacts with MinD and FtsZ.

Its function is as follows. Cell division inhibitor that blocks the formation of polar Z ring septums. Rapidly oscillates between the poles of the cell to destabilize FtsZ filaments that have formed before they mature into polar Z rings. Prevents FtsZ polymerization. The sequence is that of Probable septum site-determining protein MinC from Pectobacterium carotovorum subsp. carotovorum (strain PC1).